Here is a 367-residue protein sequence, read N- to C-terminus: Dual specificity protein phosphatase 1 (367 aa).

One can recognise a Rhodanese domain in the interval Arg-20–Ser-137. The region spanning Gly-173 to Ala-314 is the Tyrosine-protein phosphatase domain. The Phosphocysteine intermediate role is filled by Cys-258. Residues Ser-359 and Ser-364 each carry the phosphoserine; by MAPK1 and MAPK3 modification.

It belongs to the protein-tyrosine phosphatase family. Non-receptor class dual specificity subfamily. Post-translationally, phosphorylation at Ser-359 and Ser-364 by MAPK1/ERK2 and MAPK3/ERK1 reduces its rate of degradation. In terms of processing, 'Lys-48'-linked polyubiquitinated by NEURL3, leading to proteasomal degradation. In terms of tissue distribution, brain. High level expression seen in the cingulate gyrus within the retrospinal cortex, ventral and medial divisions of the anterior thalamus and the medial geniculate nucleus. Expressed at moderate levels in the parietal and temporal cortex. Expressed in the cerebellum.

It localises to the nucleus. The enzyme catalyses O-phospho-L-tyrosyl-[protein] + H2O = L-tyrosyl-[protein] + phosphate. It carries out the reaction O-phospho-L-seryl-[protein] + H2O = L-seryl-[protein] + phosphate. The catalysed reaction is O-phospho-L-threonyl-[protein] + H2O = L-threonyl-[protein] + phosphate. Its function is as follows. Dual specificity phosphatase that dephosphorylates MAP kinase MAPK1/ERK2 on both 'Thr-183' and 'Tyr-185', regulating its activity during the meiotic cell cycle. The polypeptide is Dual specificity protein phosphatase 1 (Rattus norvegicus (Rat)).